A 173-amino-acid chain; its full sequence is Large ribosomal subunit protein uL10 (173 aa).

Belongs to the universal ribosomal protein uL10 family. Part of the ribosomal stalk of the 50S ribosomal subunit. The N-terminus interacts with L11 and the large rRNA to form the base of the stalk. The C-terminus forms an elongated spine to which L12 dimers bind in a sequential fashion forming a multimeric L10(L12)X complex.

Forms part of the ribosomal stalk, playing a central role in the interaction of the ribosome with GTP-bound translation factors. The polypeptide is Large ribosomal subunit protein uL10 (Corynebacterium aurimucosum (strain ATCC 700975 / DSM 44827 / CIP 107346 / CN-1) (Corynebacterium nigricans)).